The primary structure comprises 500 residues: Cysteine--tRNA ligase (500 aa).

Cysteine 29 is a Zn(2+) binding site. The short motif at 31 to 41 is the 'HIGH' region element; it reads VTVYDLCHLGH. Residues cysteine 213, histidine 238, and glutamate 242 each contribute to the Zn(2+) site. A 'KMSKS' region motif is present at residues 270–274; that stretch reads KMSKS. Lysine 273 is a binding site for ATP.

This sequence belongs to the class-I aminoacyl-tRNA synthetase family. In terms of assembly, monomer. Zn(2+) is required as a cofactor.

The protein resides in the cytoplasm. The catalysed reaction is tRNA(Cys) + L-cysteine + ATP = L-cysteinyl-tRNA(Cys) + AMP + diphosphate. This is Cysteine--tRNA ligase from Prochlorococcus marinus (strain NATL2A).